The chain runs to 139 residues: MKILESSFKDGNKRIVEMESEDAYLMTMGKWVKKSMDPLRTKVFFSTMSPTHYKIEDWGGEQGKNFYNQTTPIQDMNHWPSDCSKTLMKVIGEELDQRADFLVTVLNITQLTSYRKDAHTSIYKKPWSPYDEGSASKSG.

The protein belongs to the PC-esterase family. TBL subfamily.

This is Putative truncated protein trichome birefringence-like 46 (TBL46) from Arabidopsis thaliana (Mouse-ear cress).